The primary structure comprises 473 residues: ATP synthase subunit beta (473 aa).

Residue 153-160 (GGAGVGKT) participates in ATP binding.

Belongs to the ATPase alpha/beta chains family. As to quaternary structure, F-type ATPases have 2 components, CF(1) - the catalytic core - and CF(0) - the membrane proton channel. CF(1) has five subunits: alpha(3), beta(3), gamma(1), delta(1), epsilon(1). CF(0) has three main subunits: a(1), b(2) and c(9-12). The alpha and beta chains form an alternating ring which encloses part of the gamma chain. CF(1) is attached to CF(0) by a central stalk formed by the gamma and epsilon chains, while a peripheral stalk is formed by the delta and b chains.

It localises to the cell inner membrane. It catalyses the reaction ATP + H2O + 4 H(+)(in) = ADP + phosphate + 5 H(+)(out). Its function is as follows. Produces ATP from ADP in the presence of a proton gradient across the membrane. The catalytic sites are hosted primarily by the beta subunits. This chain is ATP synthase subunit beta, found in Rickettsia akari (strain Hartford).